The primary structure comprises 30 residues: Putative alpha-amylase inhibitor (30 aa).

It belongs to the leguminous lectin family.

Functionally, lectin and alpha-amylase inhibitor. Acts as a defensive protein against insects. This chain is Putative alpha-amylase inhibitor, found in Phaseolus vulgaris (Kidney bean).